Consider the following 172-residue polypeptide: Disulfide bond formation protein B (172 aa).

The Cytoplasmic portion of the chain corresponds to 1-11 (MNPFRWGFRAQ). Residues 12–28 (FLLGFLACAGLLAYAIY) form a helical membrane-spanning segment. The Periplasmic portion of the chain corresponds to 29–46 (VQLHLGLEPCPLCIFQRI). A disulfide bridge links C38 with C41. Residues 47–63 (AFATLALLFLLGALHGP) traverse the membrane as a helical segment. Residues 64–70 (RGAGGRK) are Cytoplasmic-facing. Residues 71–88 (AYGVLAFIAAGVGMGIAA) form a helical membrane-spanning segment. Residues 89 to 145 (RHVWVQIRPKDMMSSCGPPLSFLSETMGPFEVFRTVLTGTGDCGNIDWRFLGLSMPM) lie on the Periplasmic side of the membrane. C104 and C131 are oxidised to a cystine. Residues 146–164 (WSMVWFVGLALWALYAGFK) traverse the membrane as a helical segment. Residues 165 to 172 (HRGPRKLF) lie on the Cytoplasmic side of the membrane.

The protein belongs to the DsbB family.

The protein localises to the cell inner membrane. Required for disulfide bond formation in some periplasmic proteins. Acts by oxidizing the DsbA protein. In Xanthomonas campestris pv. campestris (strain 8004), this protein is Disulfide bond formation protein B.